The chain runs to 115 residues: Parathyroid hormone (115 aa).

Residues 1–25 form the signal peptide; that stretch reads MMSAKNMVKVMIVMFAIFLLAKSDG. Residues 26-31 constitute a propeptide that is removed on maturation; the sequence is KPVRKR. Residues 51–69 form an important for receptor binding region; sequence RVEWLRKKLQDVHNFIALG. The segment at 73-115 is disordered; it reads FHRDGGSQRPRKKEDNVLIESHQKSLGEADKADVDVLSKTKSQ.

Belongs to the parathyroid hormone family. As to quaternary structure, interacts with PTH1R (via N-terminal extracellular domain).

It is found in the secreted. Functionally, parathyroid hormone elevates calcium level by dissolving the salts in bone and preventing their renal excretion. Acts by binding to its receptor, PTH1R, activating G protein-coupled receptor signaling. Stimulates [1-14C]-2-deoxy-D-glucose (2DG) transport and glycogen synthesis in osteoblastic cells. The polypeptide is Parathyroid hormone (PTH) (Equus caballus (Horse)).